We begin with the raw amino-acid sequence, 177 residues long: Co-chaperone protein HscB homolog (177 aa).

A J domain is found at 8 to 80; the sequence is DFFALFGLPR…LPRAQYMLEL (73 aa).

Belongs to the HscB family. Interacts with HscA and stimulates its ATPase activity.

Functionally, co-chaperone involved in the maturation of iron-sulfur cluster-containing proteins. Seems to help targeting proteins to be folded toward HscA. This is Co-chaperone protein HscB homolog from Aromatoleum aromaticum (strain DSM 19018 / LMG 30748 / EbN1) (Azoarcus sp. (strain EbN1)).